The following is a 500-amino-acid chain: Pyridine nucleotide-disulfide oxidoreductase domain-containing protein 1 (500 aa).

The residue at position 1 (Met1) is an N-acetylmethionine. Positions 211–235 are disordered; it reads TRYTTEGRKKEARSKSKADNVGSAL. Positions 213–228 are enriched in basic and acidic residues; sequence YTTEGRKKEARSKSKA.

The protein belongs to the class-I pyridine nucleotide-disulfide oxidoreductase family. PYROXD1 subfamily. FAD is required as a cofactor.

It localises to the nucleus. It is found in the cytoplasm. The protein localises to the myofibril. The protein resides in the sarcomere. Its function is as follows. Probable FAD-dependent oxidoreductase; involved in the cellular oxidative stress response. Required for normal sarcomere structure and muscle fiber integrity. The sequence is that of Pyridine nucleotide-disulfide oxidoreductase domain-containing protein 1 (PYROXD1) from Homo sapiens (Human).